Consider the following 337-residue polypeptide: RAD51-associated protein 1 (337 aa).

Disordered stretches follow at residues 1–69 (MVRP…PPKK) and 88–337 (LSVK…SQVR). 2 positions are modified to phosphoserine: S19 and S23. Polar residues predominate over residues 28–38 (ISSSTPVNKSK). The tract at residues 32–50 (TPVNKSKTVPKVLKQDKPK) is interaction with DNA. Residues 44–69 (LKQDKPKPNLKNLQKEEVLPTEPPKK) show a composition bias toward basic and acidic residues. S103 and S107 each carry phosphoserine. The segment covering 105-118 (EKSTDKQGKEKTEN) has biased composition (basic and acidic residues). An SIM motif motif is present at residues 138-143 (LDKITE). Over residues 190–205 (SESDPDFDESKESDED) the composition is skewed to acidic residues. The interaction with DNA stretch occupies residues 225-286 (GEKKERKSKP…PSAESKRPKW (62 aa)). K251 is covalently cross-linked (Glycyl lysine isopeptide (Lys-Gly) (interchain with G-Cter in SUMO; alternate)). K251 is covalently cross-linked (Glycyl lysine isopeptide (Lys-Gly) (interchain with G-Cter in ubiquitin; alternate)). Residues 286 to 289 (WVPP) carry the WVPP motif motif. A compositionally biased stretch (low complexity) spans 290-304 (AASGSRNSSSNALAG). The segment at 295-334 (RNSSSNALAGTPAKSPSQSLRLGLSRLAPVKRLHPSATSS) is interaction with RAD51. S309 carries the phosphoserine modification.

As to quaternary structure, monomer; elongated monodisperse monomer. Interacts (via C-terminal region) with RAD51; the interaction is direct. Interacts (via SIM motif) with WDR48/UAF1; WDR48/UAF1 and RAD51AP1 cooperate together to stimulate RAD51-mediated homologous recombination (HR). Interacts (via WVPP motif) with DMC1; the interaction is direct. Interacts with PALB2. Interacts with RAD52. Sumoylation with SUMO2/3 by NSMCE2/MMS21 promotes stabilization, possibly by preventing ubiquitination. In terms of tissue distribution, most abundantly expressed in testis. Also expressed in spleen, thymus and bone marrow. Not detected in heart, kidney or liver.

The protein resides in the chromosome. It localises to the nucleus. Its subcellular location is the telomere. Its function is as follows. Structure-specific DNA-binding protein involved in DNA repair by promoting RAD51-mediated homologous recombination. Acts by stimulating D-Loop formation by RAD51: specifically enhances joint molecule formation through its structure-specific DNA interaction and its interaction with RAD51. Binds single-stranded DNA (ssDNA), double-stranded DNA (dsDNA) and secondary DNA structures, such as D-loop structures: has a strong preference for branched-DNA structures that are obligatory intermediates during joint molecule formation. Cooperates with WDR48/UAF1 to stimulate RAD51-mediated homologous recombination: both WDR48/UAF1 and RAD51AP1 have coordinated role in DNA-binding during homologous recombination and DNA repair. WDR48/UAF1 and RAD51AP1 also have a coordinated role in DNA-binding to promote USP1-mediated deubiquitination of FANCD2. Also involved in meiosis by promoting DMC1-mediated homologous meiotic recombination. This is RAD51-associated protein 1 from Mus musculus (Mouse).